The chain runs to 122 residues: Large ribosomal subunit protein uL14 (122 aa).

The protein belongs to the universal ribosomal protein uL14 family. In terms of assembly, part of the 50S ribosomal subunit. Forms a cluster with proteins L3 and L19. In the 70S ribosome, L14 and L19 interact and together make contacts with the 16S rRNA in bridges B5 and B8.

Its function is as follows. Binds to 23S rRNA. Forms part of two intersubunit bridges in the 70S ribosome. The protein is Large ribosomal subunit protein uL14 of Cupriavidus metallidurans (strain ATCC 43123 / DSM 2839 / NBRC 102507 / CH34) (Ralstonia metallidurans).